The following is a 258-amino-acid chain: Octanoyltransferase (258 aa).

One can recognise a BPL/LPL catalytic domain in the interval 42–226 (NLGADTLLLL…AVVAALDGAL (185 aa)). Substrate contacts are provided by residues 80-87 (RGGKITWH), 156-158 (AIG), and 169-171 (GFS). The active-site Acyl-thioester intermediate is the Cys-187.

It belongs to the LipB family.

It localises to the cytoplasm. The catalysed reaction is octanoyl-[ACP] + L-lysyl-[protein] = N(6)-octanoyl-L-lysyl-[protein] + holo-[ACP] + H(+). The protein operates within protein modification; protein lipoylation via endogenous pathway; protein N(6)-(lipoyl)lysine from octanoyl-[acyl-carrier-protein]: step 1/2. In terms of biological role, catalyzes the transfer of endogenously produced octanoic acid from octanoyl-acyl-carrier-protein onto the lipoyl domains of lipoate-dependent enzymes. Lipoyl-ACP can also act as a substrate although octanoyl-ACP is likely to be the physiological substrate. The chain is Octanoyltransferase from Rhodococcus opacus (strain B4).